The primary structure comprises 270 residues: Phosphatidylglycerol--prolipoprotein diacylglyceryl transferase (270 aa).

The next 4 membrane-spanning stretches (helical) occupy residues F19–A39, L56–E76, Q92–A112, and G116–I136. An a 1,2-diacyl-sn-glycero-3-phospho-(1'-sn-glycerol)-binding site is contributed by R138. A run of 3 helical transmembrane segments spans residues H178 to L198, G206 to L226, and L236 to V256.

The protein belongs to the Lgt family.

Its subcellular location is the cell membrane. The enzyme catalyses L-cysteinyl-[prolipoprotein] + a 1,2-diacyl-sn-glycero-3-phospho-(1'-sn-glycerol) = an S-1,2-diacyl-sn-glyceryl-L-cysteinyl-[prolipoprotein] + sn-glycerol 1-phosphate + H(+). The protein operates within protein modification; lipoprotein biosynthesis (diacylglyceryl transfer). In terms of biological role, catalyzes the transfer of the diacylglyceryl group from phosphatidylglycerol to the sulfhydryl group of the N-terminal cysteine of a prolipoprotein, the first step in the formation of mature lipoproteins. The polypeptide is Phosphatidylglycerol--prolipoprotein diacylglyceryl transferase (Bacillus cereus (strain ATCC 14579 / DSM 31 / CCUG 7414 / JCM 2152 / NBRC 15305 / NCIMB 9373 / NCTC 2599 / NRRL B-3711)).